Here is a 240-residue protein sequence, read N- to C-terminus: Dephospho-CoA kinase domain-containing protein (240 aa).

In terms of domain architecture, DPCK spans 3–207; the sequence is LVGLTGGIAS…RSMEYLPLRL (205 aa). ATP is bound at residue 8 to 15; it reads GGIASGKS.

Belongs to the CoaE family.

In Rattus norvegicus (Rat), this protein is Dephospho-CoA kinase domain-containing protein (Dcakd).